The chain runs to 97 residues: Citrate lyase acyl carrier protein (97 aa).

Ser-14 carries the O-(phosphoribosyl dephospho-coenzyme A)serine modification.

Belongs to the CitD family. Oligomer with a subunit composition of (alpha,beta,gamma)6.

It localises to the cytoplasm. Functionally, covalent carrier of the coenzyme of citrate lyase. The sequence is that of Citrate lyase acyl carrier protein from Rhodopseudomonas palustris (strain BisA53).